Reading from the N-terminus, the 228-residue chain is Ran-binding protein 1 homolog a (228 aa).

Basic and acidic residues predominate over residues 1–13 (MATNEPEHEHRDE). Disordered stretches follow at residues 1-30 (MATN…QVAP) and 159-228 (SEEE…GPST). Residues 14 to 24 (EEAGANEDEDT) are compositionally biased toward acidic residues. The RanBD1 domain maps to 27 to 162 (QVAPIVRLEE…FKEVAESEEE (136 aa)). The span at 179–228 (LTVEETKTEEKTEAKAVETAKTEVKAEEKKESEAEKSGEAKKTEESGPST) shows a compositional bias: basic and acidic residues.

Interacts with the GTP-bound form of RAN1, RAN2 and RAN3. As to expression, ubiquitous. Preferentially expressed in root tips and gynoecium.

It is found in the nucleus. The protein resides in the nuclear pore complex. This Arabidopsis thaliana (Mouse-ear cress) protein is Ran-binding protein 1 homolog a (RANBP1A).